The following is a 327-amino-acid chain: Prenyl transferase janC (327 aa).

Residues 3-23 (FPGAGPILGAIAVSSCLYFLF) form a helical membrane-spanning segment. Isopentenyl diphosphate is bound by residues Lys63 and His96. Mg(2+) is bound by residues Asp103 and Asp107. Arg112 and Lys196 together coordinate dimethylallyl diphosphate. Asn211 carries N-linked (GlcNAc...) asparagine glycosylation.

The protein belongs to the FPP/GGPP synthase family.

Its subcellular location is the membrane. It participates in secondary metabolite biosynthesis. Functionally, prenyl transferase; part of the gene cluster that mediates the biosynthesis of the indole diterpenes janthitremanes such as shearinine K or shearinine A. The geranylgeranyl diphosphate (GGPP) synthase janG catalyzes the first step in janthitremane biosynthesis via conversion of farnesyl pyrophosphate and isopentyl pyrophosphate into geranylgeranyl pyrophosphate (GGPP). Condensation of indole-3-glycerol phosphate with GGPP by the prenyl transferase janC then forms 3-geranylgeranylindole (3-GGI). Epoxidation by the FAD-dependent monooxygenase janM leads to a epoxidized-GGI that is substrate of the terpene cyclase janB for cyclization to yield paspaline. Paspaline is subsequently converted to 13-desoxypaspaline by the cytochrome P450 monooxygenase janP, via beta-PC-M6 in a series of alpha-face oxidations. The cytochrome P450 monooxygenase janQ is proposed to carry out sequential beta-face oxidation steps at C-7 and C-13 of 13-desoxypaspaline to form paspalicine and paspalinine respectively. The indole diterpene prenyltransferase janD may then convert paspalinine into shearinine K which is substrate of janO and/or additional enzymes for oxidation and cyclization to generate shearinine A. The polypeptide is Prenyl transferase janC (Penicillium janthinellum (Penicillium vitale)).